A 499-amino-acid polypeptide reads, in one-letter code: Isoflavone 2'-hydroxylase (499 aa).

A heme-binding site is contributed by Cys-436.

The protein belongs to the cytochrome P450 family. Heme is required as a cofactor.

The protein resides in the membrane. It catalyses the reaction a 2'-unsubstituted isoflavone + reduced [NADPH--hemoprotein reductase] + O2 = a 2'-hydroxyisoflavone + oxidized [NADPH--hemoprotein reductase] + H2O + H(+). Functionally, catalyzes the hydroxylation of isoflavones, daidzein and formononetin, to yield 2'-hydroxyisoflavones, 2'-hydroxydaidzein, and 2'-hydroxyformononetin, respectively. The sequence is that of Isoflavone 2'-hydroxylase (CYP81E1) from Glycyrrhiza echinata (Licorice).